Consider the following 118-residue polypeptide: Sporulation protein YjcA (118 aa).

The next 3 helical transmembrane spans lie at 8-28, 62-82, and 92-112; these read IVLLSLAVFRLARLLVFDTIM, FIGELLSCYWCTGVWCAGFLI, and AQWLILLLAIAGLAGIIETLV.

Belongs to the UPF0713 family.

The protein resides in the cell membrane. Functionally, involved in sporulation. In Bacillus subtilis (strain 168), this protein is Sporulation protein YjcA (yjcA).